The following is a 284-amino-acid chain: RNase adapter protein RapZ (284 aa).

Residue 8–15 coordinates ATP; the sequence is GRSGSGKS. GTP is bound at residue 56 to 59; sequence DVRN. The RNA-binding stretch occupies residues 266–284; that stretch reads RSRGKNVQSRHRTLEKRKT.

It belongs to the RapZ-like family. RapZ subfamily. In terms of assembly, homotrimer.

Modulates the synthesis of GlmS, by affecting the processing and stability of the regulatory small RNA GlmZ. When glucosamine-6-phosphate (GlcN6P) concentrations are high in the cell, RapZ binds GlmZ and targets it to cleavage by RNase E. Consequently, GlmZ is inactivated and unable to activate GlmS synthesis. Under low GlcN6P concentrations, RapZ is sequestered and inactivated by an other regulatory small RNA, GlmY, preventing GlmZ degradation and leading to synthesis of GlmS. The chain is RNase adapter protein RapZ from Salmonella arizonae (strain ATCC BAA-731 / CDC346-86 / RSK2980).